We begin with the raw amino-acid sequence, 2452 residues long: Lovastatin diketide synthase lovF (2452 aa).

The Ketosynthase family 3 (KS3) domain occupies P10–R381. Active-site for beta-ketoacyl synthase activity residues include C173, H308, and H343. A malonyl-CoA:ACP transacylase (MAT) domain region spans residues V496–K790. The active-site For malonyltransferase activity is the S555. Residues H861–P998 are N-terminal hotdog fold. Positions H861 to G1166 are dehydratase (DH) domain. One can recognise a PKS/mFAS DH domain in the interval H861–T1171. H893 functions as the Proton acceptor; for dehydratase activity in the catalytic mechanism. Positions Q997–T1017 are disordered. Residues P1012–T1171 are C-terminal hotdog fold. Catalysis depends on D1079, which acts as the Proton donor; for dehydratase activity. Positions E1343–M1528 are methyltransferase (CMet) domain. Residues G1745–V2064 are enoylreductase (ER) domain. Residues S2088–Q2260 form a ketoreductase (KR) domain region. One can recognise a Carrier domain in the interval A2373–Y2450. O-(pantetheine 4'-phosphoryl)serine is present on S2410.

As to quaternary structure, interacts with LovD. Requires pantetheine 4'-phosphate as cofactor.

It carries out the reaction holo-[2-methylbutanoate polyketide synthase] + 2 malonyl-CoA + S-adenosyl-L-methionine + 2 NADPH + 3 H(+) = (S)-2-methylbutanoyl-[2-methylbutanoate polyketide synthase] + S-adenosyl-L-homocysteine + 2 CO2 + 2 NADP(+) + 2 CoA + H2O. The protein operates within polyketide biosynthesis; lovastatin biosynthesis. Functionally, lovastatin diketide synthase; part of the gene cluster that mediates the biosynthesis of lovastatin (also known as mevinolin, mevacor or monacolin K), a hypolipidemic inhibitor of (3S)-hydroxymethylglutaryl-coenzyme A (HMG-CoA) reductase (HMGR). The first step in the biosynthesis of lovastatin is the production of dihydromonacolin L acid by the lovastatin nonaketide synthase lovB and the trans-acting enoyl reductase lovC via condensation of one acetyl-CoA unit and 8 malonyl-CoA units. Dihydromonacolin L acid is released from lovB by the thioesterase lovG. Next, dihydromonacolin L acid is oxidized by the dihydromonacolin L monooxygenase lovA twice to form monacolin J acid. The 2-methylbutyrate moiety of lovastatin is synthesized by the lovastatin diketide synthase lovF via condensation of one acetyl-CoA unit and one malonyl-CoA unit. Finally, the covalent attachment of this moiety to monacolin J acid is catalyzed by the transesterase lovD to yield lovastatin. LovD has broad substrate specificity and can also convert monacolin J to simvastatin using alpha-dimethylbutanoyl-S-methyl-3-mercaptopropionate (DMB-S-MMP) as the thioester acyl donor, and can also catalyze the reverse reaction and function as hydrolase in vitro. LovD has much higher activity with LovF-bound 2-methylbutanoate than with free diketide substrates. The sequence is that of Lovastatin diketide synthase lovF from Aspergillus terreus (strain NIH 2624 / FGSC A1156).